The primary structure comprises 424 residues: Imidazolonepropionase (424 aa).

Residues histidine 81 and histidine 83 each contribute to the Fe(3+) site. Zn(2+) is bound by residues histidine 81 and histidine 83. Residues arginine 90, tyrosine 153, and histidine 186 each contribute to the 4-imidazolone-5-propanoate site. An N-formimidoyl-L-glutamate-binding site is contributed by tyrosine 153. Histidine 251 serves as a coordination point for Fe(3+). Residue histidine 251 coordinates Zn(2+). A 4-imidazolone-5-propanoate-binding site is contributed by glutamate 254. Aspartate 325 contacts Fe(3+). Aspartate 325 is a Zn(2+) binding site. Residues asparagine 327 and glycine 329 each coordinate N-formimidoyl-L-glutamate. Threonine 330 provides a ligand contact to 4-imidazolone-5-propanoate.

Belongs to the metallo-dependent hydrolases superfamily. HutI family. Zn(2+) is required as a cofactor. The cofactor is Fe(3+).

It localises to the cytoplasm. It catalyses the reaction 4-imidazolone-5-propanoate + H2O = N-formimidoyl-L-glutamate. It functions in the pathway amino-acid degradation; L-histidine degradation into L-glutamate; N-formimidoyl-L-glutamate from L-histidine: step 3/3. Functionally, catalyzes the hydrolytic cleavage of the carbon-nitrogen bond in imidazolone-5-propanoate to yield N-formimidoyl-L-glutamate. It is the third step in the universal histidine degradation pathway. This Syntrophobacter fumaroxidans (strain DSM 10017 / MPOB) protein is Imidazolonepropionase.